Reading from the N-terminus, the 74-residue chain is Protein sok (74 aa).

A disordered region spans residues 26–45 (TQHGNKPPSRHEAESLKRRA).

In Escherichia coli, this protein is Protein sok (sok).